Consider the following 331-residue polypeptide: Tyrosine recombinase XerD (331 aa).

Residues 8 to 93 (GRDGARLESF…SMRQFYRFLY (86 aa)) enclose the Core-binding (CB) domain. A Tyr recombinase domain is found at 114 to 318 (ALPKTMSVAD…LEERLQELVQ (205 aa)). Active-site residues include arginine 161 and lysine 185. Residues 214-228 (QEKSKAAASQKKTDT) show a composition bias toward basic and acidic residues. The segment at 214-239 (QEKSKAAASQKKTDTAESPWLFPSNS) is disordered. Catalysis depends on residues histidine 270, arginine 273, and histidine 296. The active-site O-(3'-phospho-DNA)-tyrosine intermediate is the tyrosine 305.

It belongs to the 'phage' integrase family. XerD subfamily. Forms a cyclic heterotetrameric complex composed of two molecules of XerC and two molecules of XerD.

The protein localises to the cytoplasm. Site-specific tyrosine recombinase, which acts by catalyzing the cutting and rejoining of the recombining DNA molecules. The XerC-XerD complex is essential to convert dimers of the bacterial chromosome into monomers to permit their segregation at cell division. It also contributes to the segregational stability of plasmids. The chain is Tyrosine recombinase XerD from Agrobacterium fabrum (strain C58 / ATCC 33970) (Agrobacterium tumefaciens (strain C58)).